The primary structure comprises 660 residues: MYASSARDGIPGKWCNARRKQLPLLISKDFPAELYHSLPCKSLENGHIKKVKGVKATLAEAPATPTEKSNSEVPQKKLKVLVAGGGIGGLVFALAGKKRGFDVLVFERDISAIRGEGQYRGPIQIQSNALAALEAIDMDVAEEIMNAGCITGQRINGLVDGISGNWYCKFDTFTPAVERGLPVTRVISRMTLQQILARLQGEDVIMNESHVVNFADDGETVTVNPELCQQYTGDLLVGADGIRSKVRTNLFGPSELTYSGYTCYTGIADFVPADIDTAGYRVFLGHKQYFVSSDVGGGKMQWYAFHNEPAGGVDAPNGKKERLLKIFGGWCDNVIDLSVATDEDAILRRDIYDRPPTFSWGKGRVTLLGDSVHAMQPNLGQGGCMAIEDSYQLALELEKAWSRSAESGSPMDVISSLRSYESARKLRVGVIHGLARMAAIMASAYKAYLGVGLGPLSFITKFRIPHPGRVGGRFFIDLGMPLMLSWVLGGNGEKLEGRIQHCRLSEKANDQLRNWFEDDDALERATDAEWLLLPAGNSNAALETLVLSRDENMPCTIGSVSHANIPGKSVVIPLSQVSDMHARISYNGGAFLGTAFRSDHGTWFIDNEGRRYRVSPNFPMRFHSSDVIVFGSDKAAFRIKAMKFAPKTAAKEDRQAVGAA.

Residues 1-49 (MYASSARDGIPGKWCNARRKQLPLLISKDFPAELYHSLPCKSLENGHIK) constitute a chloroplast transit peptide. FAD-binding positions include 79–107 (KVLVAGGGIGGLVFALAGKKRGFDVLVFE) and 357–370 (TFSWGKGRVTLLGD). The 65-residue stretch at 545–609 (LVLSRDENMP…HGTWFIDNEG (65 aa)) folds into the FHA domain.

Requires FAD as cofactor.

The protein resides in the plastid. The protein localises to the chloroplast membrane. It localises to the chloroplast thylakoid membrane. The catalysed reaction is all-trans-zeaxanthin + 4 reduced [2Fe-2S]-[ferredoxin] + 2 O2 + 4 H(+) = all-trans-violaxanthin + 4 oxidized [2Fe-2S]-[ferredoxin] + 2 H2O. It catalyses the reaction all-trans-zeaxanthin + 2 reduced [2Fe-2S]-[ferredoxin] + O2 + 2 H(+) = all-trans-antheraxanthin + 2 oxidized [2Fe-2S]-[ferredoxin] + H2O. It carries out the reaction all-trans-antheraxanthin + 2 reduced [2Fe-2S]-[ferredoxin] + O2 + 2 H(+) = all-trans-violaxanthin + 2 oxidized [2Fe-2S]-[ferredoxin] + H2O. The enzyme catalyses beta-cryptoxanthin + 2 reduced [2Fe-2S]-[ferredoxin] + O2 + 2 H(+) = (5R,6S)-5,6-epoxi-beta-cryptoxanthin + 2 oxidized [2Fe-2S]-[ferredoxin] + H2O. It functions in the pathway plant hormone biosynthesis; abscisate biosynthesis. In terms of biological role, converts zeaxanthin into antheraxanthin and subsequently violaxanthin. Also acts on beta-cryptoxanthin. Involved in the epoxidation of zeaxanthin. This chain is Zeaxanthin epoxidase, chloroplastic, found in Capsicum annuum (Capsicum pepper).